Here is a 149-residue protein sequence, read N- to C-terminus: 3-dehydroquinate dehydratase (149 aa).

Tyr-26 serves as the catalytic Proton acceptor. Substrate contacts are provided by Asn-78, His-84, and Asp-91. The active-site Proton donor is the His-104. Residues 105–106 and Arg-115 contribute to the substrate site; that span reads LS.

It belongs to the type-II 3-dehydroquinase family. Homododecamer.

The catalysed reaction is 3-dehydroquinate = 3-dehydroshikimate + H2O. It functions in the pathway metabolic intermediate biosynthesis; chorismate biosynthesis; chorismate from D-erythrose 4-phosphate and phosphoenolpyruvate: step 3/7. Functionally, catalyzes a trans-dehydration via an enolate intermediate. In Polynucleobacter asymbioticus (strain DSM 18221 / CIP 109841 / QLW-P1DMWA-1) (Polynucleobacter necessarius subsp. asymbioticus), this protein is 3-dehydroquinate dehydratase.